Consider the following 797-residue polypeptide: Glycoprotein gp2 (797 aa).

Residues 1–25 (MGFIYARKLLLCMAVSIYAIGSTTT) form the signal peptide. Disordered regions lie at residues 24-188 (TTTE…TTAA) and 212-549 (AATT…EIVP). The span at 212 to 373 (AATTTAATTT…PDSSTGSTST (162 aa)) shows a compositional bias: low complexity. The segment covering 374–394 (AEPSSTFTLTPSTATPSTDQF) has biased composition (polar residues). Composition is skewed to low complexity over residues 395–430 (TGSS…EAST) and 445–457 (TPDG…NTTP). Residues 466–492 (FADTQQTPDNGVSTQHTTINDHTTANA) show a composition bias toward polar residues. Residues 495-505 (HAGHHRGRAGG) are compositionally biased toward basic residues. The N-linked (GlcNAc...) asparagine; by host glycan is linked to asparagine 590. Residues 766–790 (FALVAATTLTVTILCLLCCLYCMLT) form a helical membrane-spanning segment.

It is found in the virion membrane. Virulence factor. This chain is Glycoprotein gp2 (EUs4), found in Equine herpesvirus 1 (strain Ab4p) (EHV-1).